Here is a 338-residue protein sequence, read N- to C-terminus: Formamidase (338 aa).

A CN hydrolase domain is found at 15–257; the sequence is VVIGLAQLAL…DEIVCCELRP (243 aa). The active-site Proton acceptor is Glu61. Residue Lys130 is the Proton donor of the active site. Cys163 (nucleophile) is an active-site residue.

It belongs to the carbon-nitrogen hydrolase superfamily. Aliphatic amidase family.

The enzyme catalyses formamide + H2O = formate + NH4(+). In terms of biological role, is an aliphatic amidase with a restricted substrate specificity, as it only hydrolyzes formamide. This is Formamidase from Pseudomonas syringae pv. tomato (strain ATCC BAA-871 / DC3000).